The following is a 263-amino-acid chain: S-methyl-5'-thioadenosine phosphorylase (263 aa).

Residues threonine 13, 55 to 56 (RH), and 88 to 89 (SA) contribute to the phosphate site. A substrate-binding site is contributed by methionine 186. Threonine 187 is a binding site for phosphate. 210-212 (DYD) is a substrate binding site.

Belongs to the PNP/MTAP phosphorylase family. MTAP subfamily. In terms of assembly, homohexamer. Dimer of a homotrimer.

It catalyses the reaction S-methyl-5'-thioadenosine + phosphate = 5-(methylsulfanyl)-alpha-D-ribose 1-phosphate + adenine. Its pathway is amino-acid biosynthesis; L-methionine biosynthesis via salvage pathway; S-methyl-5-thio-alpha-D-ribose 1-phosphate from S-methyl-5'-thioadenosine (phosphorylase route): step 1/1. Functionally, catalyzes the reversible phosphorylation of S-methyl-5'-thioadenosine (MTA) to adenine and 5-methylthioribose-1-phosphate. Involved in the breakdown of MTA, a major by-product of polyamine biosynthesis. Responsible for the first step in the methionine salvage pathway after MTA has been generated from S-adenosylmethionine. Has broad substrate specificity with 6-aminopurine nucleosides as preferred substrates. This chain is S-methyl-5'-thioadenosine phosphorylase, found in Nitrosopumilus maritimus (strain SCM1).